Reading from the N-terminus, the 405-residue chain is Plasma serine protease inhibitor (405 aa).

The N-terminal stretch at 1 to 19 (MRFFPILCLVLFISHGVAS) is a signal peptide. Positions 20 to 24 (RRHSH) are cleaved as a propeptide — removed in mature form. N247 carries N-linked (GlcNAc...) asparagine glycosylation.

The protein belongs to the serpin family. As to quaternary structure, forms protease inhibiting heterodimers in extracellular body fluids with serine proteases such as activated protein C/coagulation factor V/F5, acrosin/ACR, chymotrypsinogen B/CTRB1, prothrombin/F2, factor Xa/F10, factor XI/F11, kallikrein/KLKB1, tissue kallikrein, trypsin/PRSS1, prostate specific antigen/KLK3, tissue plasminogen activator/PLAT and urinary plasminogen activator/PLAU. Forms membrane-anchored serine proteases inhibiting heterodimers with TMPRSS7 and TMPRSS11E. Interacts with SEMG2. N-glycosylated; glycans consist of a mixture of sialylated bi- (including sialyl-Lewis X epitopes), tri- and tetra-antennary complex-type chains; affects the maximal heparin- and thrombomodulin-enhanced rates of thrombin inhibition. O-glycosylated; further modified with 2 sialic acid residues. Proteolytically cleaved at the N-terminus; inhibits slightly the heparin- and thrombomodulin-enhanced rates of thrombin inhibition. In terms of processing, proteolytically cleaved. Inhibition of proteases is accompanied by formation of a stable enzyme-inhibitor complex and by degradation of the serpin to lower molecular weight derivatives. As to expression, not detected in blood plasma (at protein level). Expressed in testis, epididymis, seminal vesicles, prostate and ovaries.

It localises to the secreted. It is found in the extracellular space. Its activity is regulated as follows. Its inhibitory activity is greatly enhanced in the presence of glycosaminoglycans, heparin, thrombomodulin and phospholipids vesicles. Functionally, heparin-dependent serine protease inhibitor acting in body fluids and secretions. Inactivates serine proteases by binding irreversibly to their serine activation site. Involved in the regulation of intravascular and extravascular proteolytic activities. Plays hemostatic roles in the blood plasma. Acts as a procoagulant and pro-inflammatory factor by inhibiting the anticoagulant activated protein C factor as well as the generation of activated protein C factor by the thrombin/thrombomodulin complex. Acts as an anticoagulant factor by inhibiting blood coagulation factors like prothrombin, factor XI, factor Xa, plasma kallikrein and fibrinolytic enzymes such as tissue- and urinary-type plasminogen activators. In seminal plasma, inactivates several serine proteases implicated in the reproductive system. Inhibits the serpin acrosin; indirectly protects component of the male genital tract from being degraded by excessive released acrosin. Inhibits tissue- and urinary-type plasminogen activator, prostate-specific antigen and kallikrein activities; has a control on the sperm motility and fertilization. Inhibits the activated protein C-catalyzed degradation of SEMG1 and SEMG2; regulates the degradation of semenogelin during the process of transfer of spermatozoa from the male reproductive tract into the female tract. In urine, inhibits urinary-type plasminogen activator and kallikrein activities. Inactivates membrane-anchored serine proteases activities such as MPRSS7 and TMPRSS11E. Inhibits urinary-type plasminogen activator-dependent tumor cell invasion and metastasis. May also play a non-inhibitory role in seminal plasma and urine as a hydrophobic hormone carrier by its binding to retinoic acid. This chain is Plasma serine protease inhibitor (Serpina5), found in Mus musculus (Mouse).